We begin with the raw amino-acid sequence, 252 residues long: ATP synthase subunit a (252 aa).

5 consecutive transmembrane segments (helical) span residues 33–53 (GQVF…ALAA), 92–112 (VPFV…GALV), 130–150 (DINT…YAGL), 196–216 (LVVG…VMAL), and 217–237 (GLFT…TYIG).

It belongs to the ATPase A chain family. F-type ATPases have 2 components, CF(1) - the catalytic core - and CF(0) - the membrane proton channel. CF(1) has five subunits: alpha(3), beta(3), gamma(1), delta(1), epsilon(1). CF(0) has three main subunits: a(1), b(2) and c(9-12). The alpha and beta chains form an alternating ring which encloses part of the gamma chain. CF(1) is attached to CF(0) by a central stalk formed by the gamma and epsilon chains, while a peripheral stalk is formed by the delta and b chains.

It localises to the cellular thylakoid membrane. Key component of the proton channel; it plays a direct role in the translocation of protons across the membrane. The protein is ATP synthase subunit a of Synechococcus sp. (strain PCC 6716).